A 165-amino-acid chain; its full sequence is Nascent polypeptide-associated complex subunit alpha (165 aa).

One can recognise an NAC-A/B domain in the interval 14–78 (NRNEKKAREL…AKVDNFTQRL (65 aa)). Residues 126 to 165 (LSNDDIDLVVQQTNATKGQAIKALKEHNGDIVNAIMSLSK) form the UBA domain.

Belongs to the NAC-alpha family. In terms of assembly, part of the nascent polypeptide-associated complex (NAC), consisting of EGD2 and EGD1. NAC associates with ribosomes via EGD1.

The protein localises to the cytoplasm. It is found in the nucleus. Component of the nascent polypeptide-associated complex (NAC), a dynamic component of the ribosomal exit tunnel, protecting the emerging polypeptides from interaction with other cytoplasmic proteins to ensure appropriate nascent protein targeting. The NAC complex also promotes mitochondrial protein import by enhancing productive ribosome interactions with the outer mitochondrial membrane and blocks the inappropriate interaction of ribosomes translating non-secretory nascent polypeptides with translocation sites in the membrane of the endoplasmic reticulum. EGD2 may also be involved in transcription regulation. The polypeptide is Nascent polypeptide-associated complex subunit alpha (EGD2) (Candida glabrata (strain ATCC 2001 / BCRC 20586 / JCM 3761 / NBRC 0622 / NRRL Y-65 / CBS 138) (Yeast)).